We begin with the raw amino-acid sequence, 226 residues long: Putative uroporphyrinogen-III synthase (226 aa).

This sequence belongs to the uroporphyrinogen-III synthase family.

The catalysed reaction is hydroxymethylbilane = uroporphyrinogen III + H2O. It participates in porphyrin-containing compound metabolism; protoporphyrin-IX biosynthesis; coproporphyrinogen-III from 5-aminolevulinate: step 3/4. In terms of biological role, catalyzes cyclization of the linear tetrapyrrole, hydroxymethylbilane, to the macrocyclic uroporphyrinogen III. The polypeptide is Putative uroporphyrinogen-III synthase (Archaeoglobus fulgidus (strain ATCC 49558 / DSM 4304 / JCM 9628 / NBRC 100126 / VC-16)).